The following is a 196-amino-acid chain: MLDRIKVCFTESIQTQIAAAEALPDAISRGAIAMVQSLLNGNKILCCGNGTSAANSQHFAASMINRFEAERPSLPAIALNADNVVLTAIANDRLHEEIYAKQVRALGQAGDVLLAISTRGNSRDIVKAVESAVTRDMTIVALTGYDGGELAGLLGPQDVEIRIPSHRSARIQEMHMLTVNCLCDLIDNTLFPHQND.

The 163-residue stretch at 34-196 (MVQSLLNGNK…DNTLFPHQND (163 aa)) folds into the SIS domain.

This sequence belongs to the SIS family. DiaA subfamily. As to quaternary structure, homotetramer; dimer of dimers.

Functionally, required for the timely initiation of chromosomal replication via direct interactions with the DnaA initiator protein. This is DnaA initiator-associating protein DiaA from Pectobacterium atrosepticum (strain SCRI 1043 / ATCC BAA-672) (Erwinia carotovora subsp. atroseptica).